The primary structure comprises 132 residues: MAMSDPIADFLTRIRNAGMVYHDKVEVPASNVKKAIAEILKEEGFIKDVEYISDNKQGVIRCYLKYGQNRERVITGLKRISRPGLRVYAKKDEVPKVLGGLGVAILSTSKGLMTDKRARQEGLGGEVLCYIW.

The protein belongs to the universal ribosomal protein uS8 family. As to quaternary structure, part of the 30S ribosomal subunit. Contacts proteins S5 and S12.

In terms of biological role, one of the primary rRNA binding proteins, it binds directly to 16S rRNA central domain where it helps coordinate assembly of the platform of the 30S subunit. The chain is Small ribosomal subunit protein uS8 from Desulfitobacterium hafniense (strain DSM 10664 / DCB-2).